Consider the following 247-residue polypeptide: APRKFFVGGNWKMNGDKKSLGELIQTLNAAKVPFTGEIVCAPPEAYLDFARLKVDPKFGVAAQNCYKVSKGAFTGEISPAMIKDCGVTWVILGHSERRHVFGESDELIGQKVSHALSEGLGVVACIGEKLDEREAGITEGVVFEVTEVIADDVKDWSKVVLAYEPVWAIGTGKTASPQQSQELHGKLRKWLKENVSETVADSVRIIYGGSVTGATCKELASEPDVDGFLVGGASLKPEFVEYKDVRQ.

Residues asparagine 10 and lysine 12 each contribute to the substrate site. Catalysis depends on histidine 94, which acts as the Electrophile. Glutamate 164 (proton acceptor) is an active-site residue.

The protein belongs to the triosephosphate isomerase family. Homodimer.

It is found in the cytoplasm. It catalyses the reaction D-glyceraldehyde 3-phosphate = dihydroxyacetone phosphate. The enzyme catalyses dihydroxyacetone phosphate = methylglyoxal + phosphate. It functions in the pathway carbohydrate biosynthesis; gluconeogenesis. Its pathway is carbohydrate degradation; glycolysis; D-glyceraldehyde 3-phosphate from glycerone phosphate: step 1/1. In terms of biological role, triosephosphate isomerase is an extremely efficient metabolic enzyme that catalyzes the interconversion between dihydroxyacetone phosphate (DHAP) and D-glyceraldehyde-3-phosphate (G3P) in glycolysis and gluconeogenesis. It is also responsible for the non-negligible production of methylglyoxal a reactive cytotoxic side-product that modifies and can alter proteins, DNA and lipids. This is Triosephosphate isomerase from Latimeria chalumnae (Coelacanth).